We begin with the raw amino-acid sequence, 302 residues long: 33 kDa chaperonin (302 aa).

2 disulfides stabilise this stretch: Cys-234/Cys-236 and Cys-267/Cys-270.

Belongs to the HSP33 family. In terms of processing, under oxidizing conditions two disulfide bonds are formed involving the reactive cysteines. Under reducing conditions zinc is bound to the reactive cysteines and the protein is inactive.

It is found in the cytoplasm. In terms of biological role, redox regulated molecular chaperone. Protects both thermally unfolding and oxidatively damaged proteins from irreversible aggregation. Plays an important role in the bacterial defense system toward oxidative stress. The protein is 33 kDa chaperonin of Neisseria gonorrhoeae (strain ATCC 700825 / FA 1090).